The following is a 521-amino-acid chain: Protein YjiT (521 aa).

This is Protein YjiT (yjiT) from Escherichia coli (strain K12).